We begin with the raw amino-acid sequence, 416 residues long: N-carbamoyl-L-amino-acid amidohydrolase (416 aa).

H87, D98, E133, and H194 together coordinate a divalent metal cation. The an N-carbamoyl-L-alpha-amino acid site is built by Q197, H230, N279, R292, and G361. Residues 213-331 (HCQGLWWLEF…SIEAVGHFDP (119 aa)) are involved in dimerization. H386 contacts a divalent metal cation.

It belongs to the peptidase M20 family. Homodimer. It depends on Mn(2+) as a cofactor. Ni(2+) serves as cofactor. Co(2+) is required as a cofactor. The cofactor is Fe(2+).

It carries out the reaction an N-carbamoyl-L-alpha-amino acid + H2O + 2 H(+) = an L-alpha-amino acid + NH4(+) + CO2. It catalyses the reaction N-carbamoyl-L-methionine + H2O + 2 H(+) = L-methionine + NH4(+) + CO2. The enzyme catalyses N-acetyl-L-methionine + H2O = L-methionine + acetate. The catalysed reaction is N(alpha)-formyl-L-methionine + H2O = formate + L-methionine. It carries out the reaction N-carbamoyl-L-alanine + H2O + 2 H(+) = L-alanine + NH4(+) + CO2. It catalyses the reaction N-carbamoyl-L-cysteine + H2O + 2 H(+) = L-cysteine + NH4(+) + CO2. The enzyme catalyses N-carbamoyl-L-tryptophan + H2O + 2 H(+) = L-tryptophan + NH4(+) + CO2. The catalysed reaction is N-carbamoyl-L-valine + H2O + 2 H(+) = L-valine + NH4(+) + CO2. It carries out the reaction N-carbamoyl-L-phenylalanine + H2O + 2 H(+) = L-phenylalanine + NH4(+) + CO2. Strongly inhibited by Hg(2+), Cu(2+), Zn(2+), Pb(2+) and Fe(3+) ions, and slightly inhibited by Na(+) and K(+) ions. Beta-mercaptoethanol and 5,5'-dithiobis-(2-nitrobenzoic acid)(DTNB) cause 34% and 42% inhibition, respectively. Catalyzes the hydrolysis of both aliphatic and aromatic N-carbamoyl-L-alpha-amino acids to free L-alpha-amino acids. Is strictly L-specific since it is inactive toward N-carbamoyl-D-alpha-amino acids. Is also able to hydrolyze N-formyl-L-methionine and N-acetyl-L-methionine, but not ureidosuccinate or 3-ureidopropanoate. The chain is N-carbamoyl-L-amino-acid amidohydrolase from Rhizobium meliloti (Ensifer meliloti).